Consider the following 391-residue polypeptide: Probable protein phosphatase 2C 32 (391 aa).

Residues Met1 to Arg53 are disordered. Residues Pro8 to Pro51 are compositionally biased toward low complexity. A helical membrane pass occupies residues Leu95–Val115. A PPM-type phosphatase domain is found at Glu129–Leu386. Residues Asp168, Gly169, Asp332, and Asp377 each coordinate Mn(2+).

Belongs to the PP2C family. The cofactor is Mg(2+). It depends on Mn(2+) as a cofactor.

The protein localises to the membrane. It catalyses the reaction O-phospho-L-seryl-[protein] + H2O = L-seryl-[protein] + phosphate. The enzyme catalyses O-phospho-L-threonyl-[protein] + H2O = L-threonyl-[protein] + phosphate. This is Probable protein phosphatase 2C 32 from Oryza sativa subsp. japonica (Rice).